We begin with the raw amino-acid sequence, 111 residues long: UPF0145 protein Bphy_3680 (111 aa).

It belongs to the UPF0145 family.

The polypeptide is UPF0145 protein Bphy_3680 (Paraburkholderia phymatum (strain DSM 17167 / CIP 108236 / LMG 21445 / STM815) (Burkholderia phymatum)).